The following is a 129-amino-acid chain: Small ribosomal subunit protein uS11 (129 aa).

This sequence belongs to the universal ribosomal protein uS11 family. As to quaternary structure, part of the 30S ribosomal subunit. Interacts with proteins S7 and S18. Binds to IF-3.

Located on the platform of the 30S subunit, it bridges several disparate RNA helices of the 16S rRNA. Forms part of the Shine-Dalgarno cleft in the 70S ribosome. This is Small ribosomal subunit protein uS11 from Chelativorans sp. (strain BNC1).